The chain runs to 179 residues: Large ribosomal subunit protein uL5 (179 aa).

Belongs to the universal ribosomal protein uL5 family. In terms of assembly, part of the 50S ribosomal subunit; part of the 5S rRNA/L5/L18/L25 subcomplex. Contacts the 5S rRNA and the P site tRNA. Forms a bridge to the 30S subunit in the 70S ribosome.

Its function is as follows. This is one of the proteins that bind and probably mediate the attachment of the 5S RNA into the large ribosomal subunit, where it forms part of the central protuberance. In the 70S ribosome it contacts protein S13 of the 30S subunit (bridge B1b), connecting the 2 subunits; this bridge is implicated in subunit movement. Contacts the P site tRNA; the 5S rRNA and some of its associated proteins might help stabilize positioning of ribosome-bound tRNAs. This chain is Large ribosomal subunit protein uL5, found in Deinococcus geothermalis (strain DSM 11300 / CIP 105573 / AG-3a).